Reading from the N-terminus, the 224-residue chain is LexA repressor (224 aa).

Positions 31 to 51 (RAEIAAELGFKSANAAEEHLQ) form a DNA-binding region, H-T-H motif. Residues S142 and K179 each act as for autocatalytic cleavage activity in the active site.

Belongs to the peptidase S24 family. Homodimer.

It carries out the reaction Hydrolysis of Ala-|-Gly bond in repressor LexA.. In terms of biological role, represses a number of genes involved in the response to DNA damage (SOS response), including recA and lexA. In the presence of single-stranded DNA, RecA interacts with LexA causing an autocatalytic cleavage which disrupts the DNA-binding part of LexA, leading to derepression of the SOS regulon and eventually DNA repair. This Acidovorax ebreus (strain TPSY) (Diaphorobacter sp. (strain TPSY)) protein is LexA repressor.